A 92-amino-acid polypeptide reads, in one-letter code: MTRSLKKGPFVDHHLVAKADKAVTTKDKKPIKTWSRRSMVLPEFIGLTIAVHNGKQHVPVYITDQMVGHKLGEFALTRTFKGHPADKKVQKK.

This sequence belongs to the universal ribosomal protein uS19 family.

Protein S19 forms a complex with S13 that binds strongly to the 16S ribosomal RNA. The sequence is that of Small ribosomal subunit protein uS19 from Variovorax paradoxus (strain S110).